The following is a 218-amino-acid chain: Thymidylate kinase (218 aa).

An ATP-binding site is contributed by 15–22; that stretch reads GLDRSGKS.

This sequence belongs to the thymidylate kinase family.

It carries out the reaction dTMP + ATP = dTDP + ADP. It functions in the pathway pyrimidine metabolism; dTTP biosynthesis. Catalyzes the conversion of dTMP to dTDP. In Caenorhabditis elegans, this protein is Thymidylate kinase.